Reading from the N-terminus, the 125-residue chain is Large-conductance mechanosensitive channel (125 aa).

The next 3 membrane-spanning stretches (helical) occupy residues 19 to 39 (VGVIIGGAFTAIVNSLVKYII), 42 to 62 (FLGLFVGAIDFSDLVFKIGNA), and 66 to 86 (VGSFLNAVINFLIIAFVVFLM).

Belongs to the MscL family. In terms of assembly, homopentamer.

It is found in the cell membrane. Functionally, channel that opens in response to stretch forces in the membrane lipid bilayer. May participate in the regulation of osmotic pressure changes within the cell. The chain is Large-conductance mechanosensitive channel from Ligilactobacillus salivarius (strain UCC118) (Lactobacillus salivarius).